The sequence spans 560 residues: Formate--tetrahydrofolate ligase (560 aa).

69 to 76 (TPAGEGKS) provides a ligand contact to ATP.

This sequence belongs to the formate--tetrahydrofolate ligase family.

It carries out the reaction (6S)-5,6,7,8-tetrahydrofolate + formate + ATP = (6R)-10-formyltetrahydrofolate + ADP + phosphate. It functions in the pathway one-carbon metabolism; tetrahydrofolate interconversion. In Listeria innocua serovar 6a (strain ATCC BAA-680 / CLIP 11262), this protein is Formate--tetrahydrofolate ligase.